The following is a 211-amino-acid chain: PITH domain-containing protein CG6153 (211 aa).

A PITH domain is found at Asp-20–Arg-192.

Belongs to the PITHD1 family.

This is PITH domain-containing protein CG6153 from Drosophila melanogaster (Fruit fly).